The following is a 255-amino-acid chain: Probable transcriptional regulatory protein Rcas_0718 (255 aa).

It belongs to the TACO1 family.

The protein resides in the cytoplasm. This Roseiflexus castenholzii (strain DSM 13941 / HLO8) protein is Probable transcriptional regulatory protein Rcas_0718.